A 249-amino-acid chain; its full sequence is MASLGVNIDHIANVRQARRTVEPDPVPMALMAELGGADGITIHLREDRRHIQDRDLTLLGQTVRTRLNLEMAATTEMVEIALREQPDMVTLVPERREEVTTEGGLDVRSQCKSLSSVIDTLQSNDIPVSLFVDPDRNQLEACQQSGARWVELHTGRYAEASWREQPITLARLIEATEQARSMGLRVNAGHGLTYQNVEPIAAIAGMEELNIGHTIVARALCVGLQEAVREMKCLVQNPRRDPLFGSTSS.

Asn7 lines the 3-amino-2-oxopropyl phosphate pocket. 9–10 (DH) contributes to the 1-deoxy-D-xylulose 5-phosphate binding site. Arg18 lines the 3-amino-2-oxopropyl phosphate pocket. The active-site Proton acceptor is His43. 2 residues coordinate 1-deoxy-D-xylulose 5-phosphate: Arg45 and His50. Glu70 functions as the Proton acceptor in the catalytic mechanism. 1-deoxy-D-xylulose 5-phosphate is bound at residue Thr100. The active-site Proton donor is His190. Residues Gly191 and 212 to 213 (GH) each bind 3-amino-2-oxopropyl phosphate.

It belongs to the PNP synthase family. In terms of assembly, homooctamer; tetramer of dimers.

It is found in the cytoplasm. It carries out the reaction 3-amino-2-oxopropyl phosphate + 1-deoxy-D-xylulose 5-phosphate = pyridoxine 5'-phosphate + phosphate + 2 H2O + H(+). It participates in cofactor biosynthesis; pyridoxine 5'-phosphate biosynthesis; pyridoxine 5'-phosphate from D-erythrose 4-phosphate: step 5/5. In terms of biological role, catalyzes the complicated ring closure reaction between the two acyclic compounds 1-deoxy-D-xylulose-5-phosphate (DXP) and 3-amino-2-oxopropyl phosphate (1-amino-acetone-3-phosphate or AAP) to form pyridoxine 5'-phosphate (PNP) and inorganic phosphate. The protein is Pyridoxine 5'-phosphate synthase of Synechococcus sp. (strain CC9311).